Here is a 306-residue protein sequence, read N- to C-terminus: Beta-lactamase 1 (306 aa).

Positions 1–27 (MILKNKRMLKIGICVGILGLSITSLEA) are cleaved as a signal peptide. Residue Ser91 is the Acyl-ester intermediate of the active site. Glu187 acts as the Proton acceptor in catalysis. 253–255 (KSG) contacts substrate.

The protein belongs to the class-A beta-lactamase family.

It catalyses the reaction a beta-lactam + H2O = a substituted beta-amino acid. Functionally, this protein is a beta-lactamase with a substrate specificity for penicillins. This is Beta-lactamase 1 (blaY) from Bacillus cereus.